A 416-amino-acid chain; its full sequence is Putative UV-damage repair protein UvrX (416 aa).

Positions 12–196 (ILCVDMKSFY…RPLSKMWGIG (185 aa)) constitute a UmuC domain. Residues Asp-16 and Asp-115 each contribute to the Mg(2+) site. Glu-116 is a catalytic residue.

Belongs to the DNA polymerase type-Y family. It depends on Mg(2+) as a cofactor.

The sequence is that of Putative UV-damage repair protein UvrX (uvrX) from Bacillus subtilis (strain 168).